Reading from the N-terminus, the 98-residue chain is NADH-ubiquinone oxidoreductase chain 4L (98 aa).

Transmembrane regions (helical) follow at residues 1 to 21, 29 to 49, and 61 to 81; these read MSLVYMNIMTAFMVSLAGLLM, SLLCLEGMMLSLFVMATLTIL, and IILLVFAACEAALGLSLLVMV.

The protein belongs to the complex I subunit 4L family. As to quaternary structure, core subunit of respiratory chain NADH dehydrogenase (Complex I) which is composed of 45 different subunits.

The protein resides in the mitochondrion inner membrane. It catalyses the reaction a ubiquinone + NADH + 5 H(+)(in) = a ubiquinol + NAD(+) + 4 H(+)(out). Functionally, core subunit of the mitochondrial membrane respiratory chain NADH dehydrogenase (Complex I) which catalyzes electron transfer from NADH through the respiratory chain, using ubiquinone as an electron acceptor. Part of the enzyme membrane arm which is embedded in the lipid bilayer and involved in proton translocation. The polypeptide is NADH-ubiquinone oxidoreductase chain 4L (MT-ND4L) (Rangifer tarandus (Reindeer)).